The following is a 121-amino-acid chain: Cell division protein FtsL (121 aa).

At 1–34 (MISRVTEALSKVKGSMGSHERHALPGVIGDDLLR) the chain is on the cytoplasmic side. A helical membrane pass occupies residues 35–57 (FGKLPLCLFICIILTAVTVVTTA). Residues 58 to 121 (HHTRLLTAQR…PSQENIVVQK (64 aa)) are Periplasmic-facing.

Belongs to the FtsL family. In terms of assembly, part of a complex composed of FtsB, FtsL and FtsQ.

The protein resides in the cell inner membrane. Its function is as follows. Essential cell division protein. May link together the upstream cell division proteins, which are predominantly cytoplasmic, with the downstream cell division proteins, which are predominantly periplasmic. This chain is Cell division protein FtsL, found in Shigella dysenteriae serotype 1 (strain Sd197).